Here is a 657-residue protein sequence, read N- to C-terminus: Protein PSK SIMULATOR 1 (657 aa).

Composition is skewed to polar residues over residues 1 to 15 (MGGLCSRSSSVNNAP), 26 to 39 (HLNNNASDLNSHSG), 62 to 76 (ESFSFPIVSSGSHPQ), and 540 to 556 (RSPNQKTIQLSSGSHNP). 2 disordered regions span residues 1–80 (MGGL…NIED) and 534–559 (PVKSPIRSPNQKTIQLSSGSHNPSMG). Residue G2 is the site of N-myristoyl glycine attachment.

It is found in the nucleus. Its function is as follows. Promotes seedling growth probably via the regulation of phytosulfokine (PSK) signaling; PSK are peptide phytohormones acting as growth factors. Together with PSI2 and PSI3, required during vegetative growth and reproduction. May also have a function in carbohydrate metabolism. The protein is Protein PSK SIMULATOR 1 of Arabidopsis thaliana (Mouse-ear cress).